The following is a 192-amino-acid chain: MTAQSIDNILSSSEKNVKQWYVVHTASGAEKRIKEDMLRKIAKQNMTHFFEDILIPVFGVSEVKRGKNVKVEKKLMPSYILIKMNMTDKSWHLVKNISGVTGFLGSKTTPKALTESEIQNIFNNLEAEAKEAKNSKLYEVGEIVTVTDGPFETFMGTVEEIDQEKNRLKVSVAIFGKATPIELNFNQVKKND.

The KOW domain occupies 140–168 (VGEIVTVTDGPFETFMGTVEEIDQEKNRL).

Belongs to the NusG family.

Its function is as follows. Participates in transcription elongation, termination and antitermination. In Rickettsia conorii (strain ATCC VR-613 / Malish 7), this protein is Transcription termination/antitermination protein NusG.